Consider the following 87-residue polypeptide: Toxin Css39.8 (87 aa).

The signal sequence occupies residues 1–19 (MNSLLMITACFFLIGTVWA). In terms of domain architecture, LCN-type CS-alpha/beta spans 20–85 (KEGYLVNKST…TYPLPNKSCS (66 aa)). 4 cysteine pairs are disulfide-bonded: Cys-31–Cys-84, Cys-35–Cys-60, Cys-44–Cys-65, and Cys-48–Cys-67.

The protein belongs to the long (4 C-C) scorpion toxin superfamily. Sodium channel inhibitor family. Beta subfamily. Expressed by the venom gland.

It localises to the secreted. Functionally, beta toxins bind voltage-independently at site-4 of sodium channels (Nav) and shift the voltage of activation toward more negative potentials thereby affecting sodium channel activation and promoting spontaneous and repetitive firing. This toxin is lethal to crustaceans (freshwater crayfish (Cambarellus montezumae spp.)), it provokes a reversible paralysis to insects (crickets (Achaeta spp.)), but is not toxic to mice. At high concentrations, it does displace the (beta) mammal-specific toxin Cn2 from rat brain synaptosomes. This Centruroides suffusus (Durango bark scorpion) protein is Toxin Css39.8.